The primary structure comprises 1389 residues: DNA-directed RNA polymerase subunit beta (1389 aa).

Belongs to the RNA polymerase beta chain family. In plastids the minimal PEP RNA polymerase catalytic core is composed of four subunits: alpha, beta, beta', and beta''. When a (nuclear-encoded) sigma factor is associated with the core the holoenzyme is formed, which can initiate transcription.

The protein localises to the plastid. It is found in the chloroplast. It carries out the reaction RNA(n) + a ribonucleoside 5'-triphosphate = RNA(n+1) + diphosphate. DNA-dependent RNA polymerase catalyzes the transcription of DNA into RNA using the four ribonucleoside triphosphates as substrates. This is DNA-directed RNA polymerase subunit beta from Phaeodactylum tricornutum (strain CCAP 1055/1).